A 158-amino-acid polypeptide reads, in one-letter code: Phosphopantetheine adenylyltransferase (158 aa).

Residue T9 participates in substrate binding. Residues 9-10 (TF) and H17 contribute to the ATP site. Positions 41, 73, and 87 each coordinate substrate. ATP is bound by residues 88-90 (GVR), E98, and 123-129 (WSYVSST).

Belongs to the bacterial CoaD family. Homohexamer. Requires Mg(2+) as cofactor.

It is found in the cytoplasm. The catalysed reaction is (R)-4'-phosphopantetheine + ATP + H(+) = 3'-dephospho-CoA + diphosphate. It functions in the pathway cofactor biosynthesis; coenzyme A biosynthesis; CoA from (R)-pantothenate: step 4/5. Functionally, reversibly transfers an adenylyl group from ATP to 4'-phosphopantetheine, yielding dephospho-CoA (dPCoA) and pyrophosphate. The sequence is that of Phosphopantetheine adenylyltransferase from Histophilus somni (strain 2336) (Haemophilus somnus).